The sequence spans 182 residues: Adenine phosphoribosyltransferase (182 aa).

The protein belongs to the purine/pyrimidine phosphoribosyltransferase family. In terms of assembly, homodimer.

Its subcellular location is the cytoplasm. The enzyme catalyses AMP + diphosphate = 5-phospho-alpha-D-ribose 1-diphosphate + adenine. The protein operates within purine metabolism; AMP biosynthesis via salvage pathway; AMP from adenine: step 1/1. Catalyzes a salvage reaction resulting in the formation of AMP, that is energically less costly than de novo synthesis. The sequence is that of Adenine phosphoribosyltransferase from Campylobacter jejuni subsp. doylei (strain ATCC BAA-1458 / RM4099 / 269.97).